Here is a 557-residue protein sequence, read N- to C-terminus: CCR4-NOT transcription complex subunit 6 (557 aa).

LRR repeat units follow at residues 52-73, 75-96, 98-120, and 121-143; these read HLTALHLSDNSLSRIPSDIAKL, NLVYLDLSSNKIRSLPAELGNM, SLRELHLNNNLLRVLPFELGKLF, and QLQTLGLKGNPLTQDILNLYQEP. The nuclease domain stretch occupies residues 153 to 557; sequence LLDNLSGTAK…VNGIHLPGRR (405 aa). Residue Glu-240 participates in Mg(2+) binding. Residues Glu-240, Glu-276, His-361, and Pro-366 each contribute to the substrate site. Asp-412 contacts Mg(2+). The Proton donor/acceptor role is filled by Asp-412. Substrate contacts are provided by Asn-414, Asn-481, and Phe-486.

Belongs to the CCR4/nocturin family. Component of the CCR4-NOT complex; distinct complexes seem to exist that differ in the participation of probably mutually exclusive catalytic subunits; the complex contains two deadenylase subunits, CNOT6 or CNOT6L, and CNOT7 or CNOT8. Interacts with CNOT7 and CNOT8. Interacts with UNR. Interacts with ZFP36L1 (via N-terminus). Interacts with ZNF335. Requires Mg(2+) as cofactor.

Its subcellular location is the cytoplasm. The protein resides in the nucleus. The enzyme catalyses Exonucleolytic cleavage of poly(A) to 5'-AMP.. Functionally, poly(A) nuclease with 3'-5' RNase activity. Catalytic component of the CCR4-NOT complex which is one of the major cellular mRNA deadenylases and is linked to various cellular processes including bulk mRNA degradation, miRNA-mediated repression, translational repression during translational initiation and general transcription regulation. Additional complex functions may be a consequence of its influence on mRNA expression. Involved in mRNA decay mediated by the major-protein-coding determinant of instability (mCRD) of the FOS gene in the cytoplasm. In the presence of ZNF335, enhances ligand-dependent transcriptional activity of nuclear hormone receptors, including RARA. The increase of ligand-dependent ESR1-mediated transcription is much smaller, if any. Mediates cell proliferation and cell survival and prevents cellular senescence. This chain is CCR4-NOT transcription complex subunit 6 (CNOT6), found in Homo sapiens (Human).